The sequence spans 430 residues: Histidine--tRNA ligase (430 aa).

The protein belongs to the class-II aminoacyl-tRNA synthetase family. Homodimer.

The protein localises to the cytoplasm. The catalysed reaction is tRNA(His) + L-histidine + ATP = L-histidyl-tRNA(His) + AMP + diphosphate + H(+). The protein is Histidine--tRNA ligase of Acinetobacter baumannii (strain AB307-0294).